Reading from the N-terminus, the 194-residue chain is Fimbrial protein 987P (194 aa).

Positions 1-23 (MRMKKSALTLAVLSSLFSGYSLA) are cleaved as a signal peptide. Cys-46 and Cys-85 form a disulfide bridge.

The protein belongs to the fimbrial protein family.

It localises to the fimbrium. This chain is Fimbrial protein 987P (fasA), found in Escherichia coli.